Here is a 143-residue protein sequence, read N- to C-terminus: Transcriptional regulator MraZ (143 aa).

2 SpoVT-AbrB domains span residues 5-47 (THSP…TTRE) and 76-119 (ANAE…DAGT).

This sequence belongs to the MraZ family. In terms of assembly, forms oligomers.

Its subcellular location is the cytoplasm. It is found in the nucleoid. This chain is Transcriptional regulator MraZ, found in Clavibacter michiganensis subsp. michiganensis (strain NCPPB 382).